A 1338-amino-acid chain; its full sequence is Centrosomal P4.1-associated protein (1338 aa).

Disordered regions lie at residues 78–99 (QKLE…HTGF) and 190–211 (GLSL…TTTG). Residues serine 260 and serine 317 each carry the phosphoserine modification. Residues 320-395 (VANIEERPIK…FTNAKSKFQK (76 aa)) are alpha/beta-tubulin binding. Disordered regions lie at residues 387 to 415 (TNAK…PLFK), 437 to 480 (PILK…QTGK), and 522 to 552 (QGKD…ESES). Positions 401–410 (LVTNQSTSED) are enriched in polar residues. The residue at position 541 (serine 541) is a Phosphoserine. A compositionally biased stretch (basic and acidic residues) spans 542 to 551 (PIRETMKESE). Phosphoserine; by PLK2 is present on residues serine 590 and serine 596. 3 disordered regions span residues 612–790 (HRMS…LSMS), 846–903 (VKRG…DNAR), and 1088–1158 (TQVE…HPDG). Over residues 636-651 (NRSEDLDHTAREKESE) the composition is skewed to basic and acidic residues. Residues 680 to 690 (QKSTSENQTEW) show a composition bias toward polar residues. Positions 718–765 (STEDRERGISSREDSPQVCDDKGPFKDTRTQEDKRRDVDLDLSDKDYS) are enriched in basic and acidic residues. Phosphoserine is present on serine 760. The span at 781–790 (PSRSSSLSMS) shows a compositional bias: low complexity. Residues 896 to 1338 (QPPGDNARSQ…EGNVLMDTEL (443 aa)) are interaction with STIL.

The protein belongs to the TCP10 family. In terms of assembly, forms homodimers. Associates with microtubules plus ends; binds to beta-tubulin subunits exposed on microtubule outer surface at its distal tip; also associates with microtubule lattice. Associated with the gamma-tubulin complex. Interacts with the head domain of EPB41. Interacts with LYST. Interacts with CEP152 (via C-terminus). Interacts with STIL. Forms a complex with STIL and SASS6. Phosphorylation at Ser-590 and Ser-596 by PLK2 is required for procentriole formation and centriole elongation. Phosphorylation by PLK2 oscillates during the cell cycle: it increases at G1/S transition and decreases during the exit from mitosis. Phosphorylation at Ser-596 is also mediated by PLK4 but is not a critical step in PLK4 function in procentriole assembly.

It localises to the cytoplasm. The protein localises to the cytoskeleton. Its subcellular location is the microtubule organizing center. It is found in the centrosome. The protein resides in the centriole. Its function is as follows. Plays an important role in cell division and centrosome function by participating in centriole duplication. Inhibits microtubule nucleation from the centrosome. Involved in the regulation of slow processive growth of centriolar microtubules. Acts as microtubule plus-end tracking protein that stabilizes centriolar microtubules and inhibits microtubule polymerization and extension from the distal ends of centrioles. Required for centriole elongation and for STIL-mediated centriole amplification. Required for the recruitment of CEP295 to the proximal end of new-born centrioles at the centriolar microtubule wall during early S phase in a PLK4-dependent manner. May be involved in the control of centriolar-microtubule growth by acting as a regulator of tubulin release. In Pan troglodytes (Chimpanzee), this protein is Centrosomal P4.1-associated protein (CPAP).